A 656-amino-acid chain; its full sequence is Putative L-type lectin-domain containing receptor kinase V.2 (656 aa).

The signal sequence occupies residues 1–23 (MSLLLKMLLFSLFFFYMASISQC). The Extracellular portion of the chain corresponds to 24–276 (SDPTGGQFSF…EDQERSLSSK (253 aa)). Residues 29 to 248 (GQFSFNGYLY…SHYILGWSFN (220 aa)) form a legume-lectin like region. Asn-78, Asn-124, Asn-159, Asn-190, and Asn-257 each carry an N-linked (GlcNAc...) asparagine glycan. The helical transmembrane segment at 277–297 (ILAISLSISGVTLVIVLILGV) threads the bilayer. Topologically, residues 298–656 (MLFLKRKKFL…MTESFLSSGR (359 aa)) are cytoplasmic. The Protein kinase domain maps to 334–615 (FKNSEVLGKG…GVATLPHNLL (282 aa)). ATP is bound by residues 340-348 (LGKGGFGKV) and Lys-363. Asp-459 serves as the catalytic Proton acceptor.

In the C-terminal section; belongs to the protein kinase superfamily. Ser/Thr protein kinase family. This sequence in the N-terminal section; belongs to the leguminous lectin family.

Its subcellular location is the cell membrane. The enzyme catalyses L-seryl-[protein] + ATP = O-phospho-L-seryl-[protein] + ADP + H(+). The catalysed reaction is L-threonyl-[protein] + ATP = O-phospho-L-threonyl-[protein] + ADP + H(+). This is Putative L-type lectin-domain containing receptor kinase V.2 (LECRK52) from Arabidopsis thaliana (Mouse-ear cress).